A 467-amino-acid polypeptide reads, in one-letter code: Gamma-aminobutyric acid receptor subunit gamma-3 (467 aa).

The signal sequence occupies residues Met1–Ala17. At Arg18–Phe256 the chain is on the extracellular side. Asn110 carries N-linked (GlcNAc...) asparagine glycosylation. Cysteines 171 and 185 form a disulfide. N-linked (GlcNAc...) asparagine glycosylation is present at Asn228. Residues Thr257 to Ile277 form a helical membrane-spanning segment. Residues Lys278–Pro283 are Cytoplasmic-facing. Residues Ala284–Ala303 traverse the membrane as a helical segment. The Extracellular segment spans residues Arg304–Ser311. A helical transmembrane segment spans residues Tyr312 to Met332. At Glu333 to Arg446 the chain is on the cytoplasmic side. Residues Val447–Leu467 form a helical membrane-spanning segment.

This sequence belongs to the ligand-gated ion channel (TC 1.A.9) family. Gamma-aminobutyric acid receptor (TC 1.A.9.5) subfamily. GABRG3 sub-subfamily. In terms of assembly, heteropentamer, formed by a combination of alpha (GABRA1-6), beta (GABRB1-3), gamma (GABRG1-3), delta (GABRD), epsilon (GABRE), rho (GABRR1-3), pi (GABRP) and theta (GABRQ) chains, each subunit exhibiting distinct physiological and pharmacological properties. May be palmitoylated. Expressed in brain.

It localises to the postsynaptic cell membrane. Its subcellular location is the cell membrane. The catalysed reaction is chloride(in) = chloride(out). With respect to regulation, allosterically potentiated by alphaxalone. Allosterically inhibited by pregnenolone sulfate. Inhibited by zinc and lanthanum. Gamma subunit of the heteropentameric ligand-gated chloride channel gated by gamma-aminobutyric acid (GABA), a major inhibitory neurotransmitter in the brain. GABA-gated chloride channels, also named GABA(A) receptors (GABAAR), consist of five subunits arranged around a central pore and contain GABA active binding site(s) located at the alpha and beta subunit interface(s). When activated by GABA, GABAARs selectively allow the flow of chloride across the cell membrane down their electrochemical gradient. This chain is Gamma-aminobutyric acid receptor subunit gamma-3, found in Rattus norvegicus (Rat).